The following is a 404-amino-acid chain: CCA-adding enzyme (404 aa).

The ATP site is built by Gly-27 and Arg-30. Positions 27 and 30 each coordinate CTP. Mg(2+)-binding residues include Asp-40 and Asp-42. ATP contacts are provided by Arg-111, Asp-154, Arg-157, Arg-160, and Arg-163. CTP is bound by residues Arg-111, Asp-154, Arg-157, Arg-160, and Arg-163.

This sequence belongs to the tRNA nucleotidyltransferase/poly(A) polymerase family. Bacterial CCA-adding enzyme type 3 subfamily. As to quaternary structure, homodimer. The cofactor is Mg(2+).

The enzyme catalyses a tRNA precursor + 2 CTP + ATP = a tRNA with a 3' CCA end + 3 diphosphate. It catalyses the reaction a tRNA with a 3' CCA end + 2 CTP + ATP = a tRNA with a 3' CCACCA end + 3 diphosphate. Functionally, catalyzes the addition and repair of the essential 3'-terminal CCA sequence in tRNAs without using a nucleic acid template. Adds these three nucleotides in the order of C, C, and A to the tRNA nucleotide-73, using CTP and ATP as substrates and producing inorganic pyrophosphate. tRNA 3'-terminal CCA addition is required both for tRNA processing and repair. Also involved in tRNA surveillance by mediating tandem CCA addition to generate a CCACCA at the 3' terminus of unstable tRNAs. While stable tRNAs receive only 3'-terminal CCA, unstable tRNAs are marked with CCACCA and rapidly degraded. The structural flexibility of RNA controls the choice between CCA versus CCACCA addition: following the first CCA addition cycle, nucleotide-binding to the active site triggers a clockwise screw motion, producing torque on the RNA. This ejects stable RNAs, whereas unstable RNAs are refolded while bound to the enzyme and subjected to a second CCA catalytic cycle. The protein is CCA-adding enzyme of Geobacillus stearothermophilus (Bacillus stearothermophilus).